The chain runs to 428 residues: Enolase (428 aa).

Gln163 provides a ligand contact to (2R)-2-phosphoglycerate. The active-site Proton donor is Glu205. Positions 242, 285, and 312 each coordinate Mg(2+). Lys337, Arg366, Ser367, and Lys388 together coordinate (2R)-2-phosphoglycerate. The Proton acceptor role is filled by Lys337.

Belongs to the enolase family. Mg(2+) serves as cofactor.

Its subcellular location is the cytoplasm. The protein localises to the secreted. The protein resides in the cell surface. It carries out the reaction (2R)-2-phosphoglycerate = phosphoenolpyruvate + H2O. It participates in carbohydrate degradation; glycolysis; pyruvate from D-glyceraldehyde 3-phosphate: step 4/5. In terms of biological role, catalyzes the reversible conversion of 2-phosphoglycerate (2-PG) into phosphoenolpyruvate (PEP). It is essential for the degradation of carbohydrates via glycolysis. The polypeptide is Enolase (Moorella thermoacetica (strain ATCC 39073 / JCM 9320)).